The following is a 98-amino-acid chain: Large ribosomal subunit protein uL23c (98 aa).

Belongs to the universal ribosomal protein uL23 family. In terms of assembly, part of the 50S ribosomal subunit.

Its subcellular location is the plastid. In terms of biological role, binds to 23S rRNA. The chain is Large ribosomal subunit protein uL23c (rpl23) from Euglena longa (Euglenophycean alga).